The chain runs to 240 residues: 4-hydroxy-tetrahydrodipicolinate reductase (240 aa).

Residues 79–81 (ATT) and 103–106 (SANM) contribute to the NAD(+) site. Catalysis depends on His135, which acts as the Proton donor/acceptor. His136 is a binding site for (S)-2,3,4,5-tetrahydrodipicolinate. Lys139 serves as the catalytic Proton donor. 145–146 (GT) contacts (S)-2,3,4,5-tetrahydrodipicolinate.

Belongs to the DapB family.

It localises to the cytoplasm. The catalysed reaction is (S)-2,3,4,5-tetrahydrodipicolinate + NAD(+) + H2O = (2S,4S)-4-hydroxy-2,3,4,5-tetrahydrodipicolinate + NADH + H(+). The enzyme catalyses (S)-2,3,4,5-tetrahydrodipicolinate + NADP(+) + H2O = (2S,4S)-4-hydroxy-2,3,4,5-tetrahydrodipicolinate + NADPH + H(+). It functions in the pathway amino-acid biosynthesis; L-lysine biosynthesis via DAP pathway; (S)-tetrahydrodipicolinate from L-aspartate: step 4/4. Catalyzes the conversion of 4-hydroxy-tetrahydrodipicolinate (HTPA) to tetrahydrodipicolinate. The sequence is that of 4-hydroxy-tetrahydrodipicolinate reductase from Staphylococcus aureus (strain MRSA252).